Reading from the N-terminus, the 104-residue chain is Flagellar hook-basal body complex protein FliE (104 aa).

It belongs to the FliE family.

It is found in the bacterial flagellum basal body. In Salmonella newport (strain SL254), this protein is Flagellar hook-basal body complex protein FliE.